The chain runs to 133 residues: Small ribosomal subunit protein bS6 (133 aa).

The tract at residues 93 to 133 (KTAVTEPSPMMKEEPRRERRDDSAPRQERAEKKTETTEDNA) is disordered. Residues 103–133 (MKEEPRRERRDDSAPRQERAEKKTETTEDNA) are compositionally biased toward basic and acidic residues.

Belongs to the bacterial ribosomal protein bS6 family.

Its function is as follows. Binds together with bS18 to 16S ribosomal RNA. The chain is Small ribosomal subunit protein bS6 from Alteromonas mediterranea (strain DSM 17117 / CIP 110805 / LMG 28347 / Deep ecotype).